We begin with the raw amino-acid sequence, 139 residues long: Ribulose bisphosphate carboxylase small subunit (139 aa).

Belongs to the RuBisCO small chain family. Heterohexadecamer of 8 large and 8 small subunits.

The protein resides in the plastid. It localises to the chloroplast. Its function is as follows. RuBisCO catalyzes two reactions: the carboxylation of D-ribulose 1,5-bisphosphate, the primary event in carbon dioxide fixation, as well as the oxidative fragmentation of the pentose substrate in the photorespiration process. Both reactions occur simultaneously and in competition at the same active site. Although the small subunit is not catalytic it is essential for maximal activity. In Cylindrotheca sp. (strain N1) (Marine diatom), this protein is Ribulose bisphosphate carboxylase small subunit.